The chain runs to 258 residues: Cytolethal distending toxin subunit A (258 aa).

An N-terminal signal peptide occupies residues 1–21 (MANKRTPIFIAGILIPILLNG). Cys-22 carries N-palmitoyl cysteine lipidation. A lipid anchor (S-diacylglycerol cysteine) is attached at Cys-22. The interval 40-71 (VEGGPTVPSPDEPGLPLPGPGPALPTNGAIPI) is disordered. Pro residues predominate over residues 46 to 62 (VPSPDEPGLPLPGPGPA). Positions 93-104 (WSRGAGSSLWAY) are mediates binding to target cells. A Ricin B-type lectin domain is found at 125-223 (RPNTIQFRNV…EKNFEFMWSI (99 aa)). The interval 236–258 (KPEIRPFPPQPIEPDEHSTGGEQ) is disordered. Residues 249 to 258 (PDEHSTGGEQ) show a composition bias toward basic and acidic residues.

As to quaternary structure, heterotrimer of 3 subunits, CdtA, CdtB and CdtC.

The protein localises to the cell outer membrane. Its function is as follows. CDTs are cytotoxins which induce host cell distension, growth arrest in G2/M phase, nucleus swelling, and chromatin fragmentation in HeLa cells. CdtA, along with CdtC, probably forms a heterodimeric subunit required for the delivery of CdtB. This Escherichia coli protein is Cytolethal distending toxin subunit A (cdtA).